The primary structure comprises 300 residues: MTASQSAQFKSEITAMPSWLRRPIGKASELSTVQRIIKQRQIHTICEEGRCPNRGECYAQKTATFLLMGPTCTRVCAFCQVDKGHAPMPLDPEEGQKVAEAVQLLGLRYVVLTSVARDDLQDQGASHFVQTMEAIRQLNPGTQIEVLTPDFWGGAGAGESGQRQRIKMIVEAQPACFNHNIETVRRLTGPVRRGAKYDRSLRVLSLVKELNPRIPTKSGLMVGYGETVAELVEAMTDLRNIGCDRLTIGQYMRPSLEHLPVQKYWTPEEFEHLGKLAREMGFSHVRSAPLVRSSYHAGEE.

Positions 46, 51, 57, 72, 76, 79, and 294 each coordinate [4Fe-4S] cluster. The region spanning 58–283 is the Radical SAM core domain; sequence YAQKTATFLL…GKLAREMGFS (226 aa).

The protein belongs to the radical SAM superfamily. Lipoyl synthase family. [4Fe-4S] cluster serves as cofactor.

The protein resides in the cytoplasm. The enzyme catalyses [[Fe-S] cluster scaffold protein carrying a second [4Fe-4S](2+) cluster] + N(6)-octanoyl-L-lysyl-[protein] + 2 oxidized [2Fe-2S]-[ferredoxin] + 2 S-adenosyl-L-methionine + 4 H(+) = [[Fe-S] cluster scaffold protein] + N(6)-[(R)-dihydrolipoyl]-L-lysyl-[protein] + 4 Fe(3+) + 2 hydrogen sulfide + 2 5'-deoxyadenosine + 2 L-methionine + 2 reduced [2Fe-2S]-[ferredoxin]. Its pathway is protein modification; protein lipoylation via endogenous pathway; protein N(6)-(lipoyl)lysine from octanoyl-[acyl-carrier-protein]: step 2/2. In terms of biological role, catalyzes the radical-mediated insertion of two sulfur atoms into the C-6 and C-8 positions of the octanoyl moiety bound to the lipoyl domains of lipoate-dependent enzymes, thereby converting the octanoylated domains into lipoylated derivatives. This Nostoc sp. (strain PCC 7120 / SAG 25.82 / UTEX 2576) protein is Lipoyl synthase 2.